The sequence spans 634 residues: 1-deoxy-D-xylulose-5-phosphate synthase (634 aa).

Thiamine diphosphate is bound by residues His-74 and 115–117 (AHS). Residue Asp-146 coordinates Mg(2+). Thiamine diphosphate-binding positions include 147–148 (GA), Asn-176, Tyr-283, and Glu-365. Asn-176 lines the Mg(2+) pocket.

This sequence belongs to the transketolase family. DXPS subfamily. Homodimer. Mg(2+) is required as a cofactor. Thiamine diphosphate serves as cofactor.

The enzyme catalyses D-glyceraldehyde 3-phosphate + pyruvate + H(+) = 1-deoxy-D-xylulose 5-phosphate + CO2. The protein operates within metabolic intermediate biosynthesis; 1-deoxy-D-xylulose 5-phosphate biosynthesis; 1-deoxy-D-xylulose 5-phosphate from D-glyceraldehyde 3-phosphate and pyruvate: step 1/1. Catalyzes the acyloin condensation reaction between C atoms 2 and 3 of pyruvate and glyceraldehyde 3-phosphate to yield 1-deoxy-D-xylulose-5-phosphate (DXP). This chain is 1-deoxy-D-xylulose-5-phosphate synthase, found in Burkholderia orbicola (strain MC0-3).